We begin with the raw amino-acid sequence, 392 residues long: Elongation factor Tu (392 aa).

One can recognise a tr-type G domain in the interval 10–202; sequence KVHVNVGTIG…VLDEYIEDPI (193 aa). A G1 region spans residues 19–26; that stretch reads GHVDHGKT. 19 to 26 serves as a coordination point for GTP; the sequence is GHVDHGKT. T26 contributes to the Mg(2+) binding site. A G2 region spans residues 60-64; sequence GITIN. The G3 stretch occupies residues 81 to 84; the sequence is DCPG. GTP contacts are provided by residues 81-85 and 136-139; these read DCPGH and NKCD. Residues 136–139 are G4; sequence NKCD. Residues 174 to 176 form a G5 region; sequence SAL.

The protein belongs to the TRAFAC class translation factor GTPase superfamily. Classic translation factor GTPase family. EF-Tu/EF-1A subfamily. Monomer.

It is found in the cytoplasm. It catalyses the reaction GTP + H2O = GDP + phosphate + H(+). Its function is as follows. GTP hydrolase that promotes the GTP-dependent binding of aminoacyl-tRNA to the A-site of ribosomes during protein biosynthesis. This is Elongation factor Tu from Apple proliferation phytoplasma.